Reading from the N-terminus, the 143-residue chain is Large ribosomal subunit protein uL13 (143 aa).

This sequence belongs to the universal ribosomal protein uL13 family. As to quaternary structure, part of the 50S ribosomal subunit.

Its function is as follows. This protein is one of the early assembly proteins of the 50S ribosomal subunit, although it is not seen to bind rRNA by itself. It is important during the early stages of 50S assembly. The chain is Large ribosomal subunit protein uL13 from Methanosarcina acetivorans (strain ATCC 35395 / DSM 2834 / JCM 12185 / C2A).